Here is a 222-residue protein sequence, read N- to C-terminus: Ribonuclease T (222 aa).

The 175-residue stretch at 20–194 (VVIDVETAGF…YDTERTAELF (175 aa)) folds into the Exonuclease domain. Positions 23, 25, 181, and 186 each coordinate Mg(2+). His-181 serves as the catalytic Proton donor/acceptor.

This sequence belongs to the RNase T family. As to quaternary structure, homodimer. Requires Mg(2+) as cofactor.

Functionally, trims short 3' overhangs of a variety of RNA species, leaving a one or two nucleotide 3' overhang. Responsible for the end-turnover of tRNA: specifically removes the terminal AMP residue from uncharged tRNA (tRNA-C-C-A). Also appears to be involved in tRNA biosynthesis. The chain is Ribonuclease T from Shewanella sp. (strain ANA-3).